We begin with the raw amino-acid sequence, 389 residues long: Acetylornithine aminotransferase (389 aa).

Pyridoxal 5'-phosphate is bound by residues 96-97 and F123; that span reads GT. R126 contributes to the N(2)-acetyl-L-ornithine binding site. 207–210 is a binding site for pyridoxal 5'-phosphate; sequence DEVQ. The residue at position 236 (K236) is an N6-(pyridoxal phosphate)lysine. S264 lines the N(2)-acetyl-L-ornithine pocket. Pyridoxal 5'-phosphate is bound at residue T265.

Belongs to the class-III pyridoxal-phosphate-dependent aminotransferase family. ArgD subfamily. As to quaternary structure, homodimer. Pyridoxal 5'-phosphate is required as a cofactor.

It is found in the cytoplasm. It carries out the reaction N(2)-acetyl-L-ornithine + 2-oxoglutarate = N-acetyl-L-glutamate 5-semialdehyde + L-glutamate. It functions in the pathway amino-acid biosynthesis; L-arginine biosynthesis; N(2)-acetyl-L-ornithine from L-glutamate: step 4/4. The sequence is that of Acetylornithine aminotransferase from Lactiplantibacillus plantarum (strain ATCC BAA-793 / NCIMB 8826 / WCFS1) (Lactobacillus plantarum).